A 316-amino-acid chain; its full sequence is Transaldolase (316 aa).

The active-site Schiff-base intermediate with substrate is the Lys-132.

It belongs to the transaldolase family. Type 1 subfamily. Homodimer.

It localises to the cytoplasm. It catalyses the reaction D-sedoheptulose 7-phosphate + D-glyceraldehyde 3-phosphate = D-erythrose 4-phosphate + beta-D-fructose 6-phosphate. It participates in carbohydrate degradation; pentose phosphate pathway; D-glyceraldehyde 3-phosphate and beta-D-fructose 6-phosphate from D-ribose 5-phosphate and D-xylulose 5-phosphate (non-oxidative stage): step 2/3. Functionally, transaldolase is important for the balance of metabolites in the pentose-phosphate pathway. The sequence is that of Transaldolase from Vibrio parahaemolyticus serotype O3:K6 (strain RIMD 2210633).